An 836-amino-acid chain; its full sequence is Zinc fingers and homeoboxes protein 2 (836 aa).

The interval 1–61 (MASKRKSTTP…EHSSKETEVV (61 aa)) is disordered. Residues 8–19 (TTPCMVRTSQVL) show a composition bias toward polar residues. The interval 27-77 (ADRAKDKGAGMPQSDVTKDSWAAEPEHSSKETEVVEVKSMGENLSKKLQGG) is interaction with EFNB1. Positions 50-61 (EPEHSSKETEVV) are enriched in basic and acidic residues. Lys64 participates in a covalent cross-link: Glycyl lysine isopeptide (Lys-Gly) (interchain with G-Cter in SUMO2). C2H2-type zinc fingers lie at residues 78 to 101 (YECK…DMQH) and 110 to 133 (YVCA…SKFH). The interval 164–214 (PITASGPGSSDNDPGVSVGKTPMTKTGKLKADAKKVPKKPDEAAPENHMEG) is disordered. Residues 192–214 (LKADAKKVPKKPDEAAPENHMEG) show a composition bias toward basic and acidic residues. Residues 195–358 (DAKKVPKKPD…PAQLTPTKVS (164 aa)) form a required for homodimerization region. 4 consecutive DNA-binding regions (homeobox) follow at residues 263-324 (NTTK…WSPE), 439-501 (TPAS…IVHI), 530-591 (PQKF…EQAV), and 628-690 (SPSS…TLSW). Residues 263–446 (NTTKYNSALD…PLTPASDRKK (184 aa)) form a required for repressor activity region. Positions 263 to 497 (NTTKYNSALD…SDHRYRCQRG (235 aa)) are required for interaction with NFYA. The required for nuclear localization stretch occupies residues 317 to 446 (HGISWSPEEV…PLTPASDRKK (130 aa)). Residues 404–442 (GQKRPLVTPQAAPEPKRPHIAQVPEPPPKVANTPLTPAS) form a disordered region. Residue Lys455 forms a Glycyl lysine isopeptide (Lys-Gly) (interchain with G-Cter in SUMO2) linkage. Composition is skewed to basic and acidic residues over residues 699–709 (MSDDRGRDAVS), 730–746 (YAKD…EKLV), and 813–824 (RVAEGTVERADS). The interval 699-836 (MSDDRGRDAV…DSTPAEAGQA (138 aa)) is disordered. Phosphoserine is present on residues Ser824 and Ser826.

It belongs to the ZHX family. In terms of assembly, homodimer (via homeobox domain 1). Heterodimer with ZHX1 (via homeobox domain 1). Heterodimer with ZHX3 (via homeobox domain 1). Heterodimerization with ZHX1 is not necessary for repressor activity. Interacts (via homeobox domain) with NFYA (via N-terminus). Interacts with EFNB1 intracellular domain peptide; the interaction enhances ZHX2 transcriptional repression activity. As to expression, expressed in retina where it localizes to Muller glial cells of the inner nuclear layer (at protein level). Detected in heart, brain, spleen, lung, liver, skeletal muscle, kidney and testis.

It localises to the nucleus. Functionally, acts as a transcriptional repressor. Represses the promoter activity of the CDC25C gene stimulated by NFYA. May play a role in retinal development where it regulates the composition of bipolar cell populations, by promoting differentiation of bipolar OFF-type cells. In the brain, may promote maintenance and suppress differentiation of neural progenitor cells in the developing cortex. This chain is Zinc fingers and homeoboxes protein 2 (Zhx2), found in Mus musculus (Mouse).